Here is a 348-residue protein sequence, read N- to C-terminus: MPGWRLLAQAGARVLGCGARGLGADPGLERRKNILFFVRNLHSKSSTWWDEHLSEENLSFVKQLVSDENKTQLTSKLNPLKDEPWPLHPWEPGSFRVGLIALKLGMMPLWTKDGQKHAVTLLQVQDCHVLKYTPKEDHNGKIAALTVGGKTVSRFYKPDSRLEFYRDLGLPPKQIHKIFHVTDNAVIKPGTPLYAAHFRPGQYVDVTAKTIGKGFQGVMKRWGFKGQPASHGQTKTHRRPGAISTGDIARVWPGTKMPGRMGNQNRTVYGLKVWRVNTKHNIIYVNGSVPGHKNCLVKIKDSTLPAYKDSCKNLPFPTYFPDGDEEELPEDLFDESVWQPSEPSITFA.

The transit peptide at Met-1–Asn-40 directs the protein to the mitochondrion.

This sequence belongs to the universal ribosomal protein uL3 family. In terms of assembly, component of the mitochondrial ribosome large subunit (39S) which comprises a 16S rRNA and about 50 distinct proteins.

The protein localises to the mitochondrion. This chain is Large ribosomal subunit protein uL3m (Mrpl3), found in Mus musculus (Mouse).